We begin with the raw amino-acid sequence, 1549 residues long: FERM and PDZ domain-containing protein 1 (1549 aa).

The PDZ domain maps to 57-135; sequence TVTLDKDVLL…ALSITVVRCT (79 aa). One can recognise an FERM domain in the interval 181–496; sequence NVLKVYLENG…GYYRLFVDPA (316 aa). 7 disordered regions span residues 554-618, 717-738, 775-834, 913-1046, 1097-1174, 1231-1257, and 1321-1347; these read AREE…DDLD, SHLS…PPQW, YDAA…YAKS, STNP…RSEI, SLDS…EAQE, LSPC…DDSP, and PETE…AGSQ. The segment covering 717–730 has biased composition (polar residues); sequence SHLSDSGSESTASR. Residues 924–931 form an important for interaction with GPSM2 region; that stretch reads EPETMETK. A compositionally biased stretch (polar residues) spans 950–961; the sequence is PSNTENPVTTDG. Over residues 962-980 the composition is skewed to low complexity; that stretch reads SSASIPHSPHHSNPGSSSP. Positions 1117-1130 are enriched in basic and acidic residues; that stretch reads SGKDLGDSKGDRLD.

Interacts with GPSM1. Interacts with GPSM2.

It is found in the cytoplasm. The protein localises to the cytosol. It localises to the cell membrane. Its function is as follows. Stabilizes membrane-bound GPSM1, and thereby promotes its interaction with GNAI1. The chain is FERM and PDZ domain-containing protein 1 (Frmpd1) from Mus musculus (Mouse).